We begin with the raw amino-acid sequence, 496 residues long: Pre-glycoprotein polyprotein GP complex (496 aa).

G2 carries N-myristoyl glycine; by host lipidation. Topologically, residues 2–17 (GQLISFFQEIPVFLQE) are extracellular. A helical transmembrane segment spans residues 18–32 (ALNIALVAVSLIAVI). A topological domain (cytoplasmic) is located at residue K33. The helical transmembrane segment at 34–53 (GIINLYKSGLFQFIFFLLLA) threads the bilayer. 2 consecutive stretches face the extracellular side: residues 54–58 (GRSCS) and 59–435 (DGTF…TLVD). C57 is a binding site for Zn(2+). 5 N-linked (GlcNAc...) asparagine; by host glycosylation sites follow: N83, N95, N137, N166, and N178. 6 disulfides stabilise this stretch: C92–C237, C135–C164, C207–C213, C282–C295, C304–C313, and C367–C388. 4 N-linked (GlcNAc...) asparagine; by host glycosylation sites follow: N368, N376, N393, and N398. Residues 436 to 456 (ICFWSTVFFTASLFLHLVGIP) form a helical membrane-spanning segment. Over 457 to 496 (THRHLKGEACPLPHKLDSFGGCRCGKYPRLRKPTIWHKRH) the chain is Cytoplasmic. Residues H458, H460, C466, H470, C478, C480, and H496 each coordinate Zn(2+).

Belongs to the arenaviridae GPC protein family. In terms of assembly, homotetramer; disulfide-linked. Interacts with host TFRC. Homotetramer. GP2 homotetramers bind through ionic interactions with GP1 homotetramers to form the GP complex together with the stable signal peptide. The GP-C polyprotein interacts with the host protease MBTPS1/SKI-1 resulting in the polyprotein processing. Specific enzymatic cleavages in vivo yield mature proteins. GP-C polyprotein is cleaved in the endoplasmic reticulum by the host protease MBTPS1. Only cleaved glycoprotein is incorporated into virions. In terms of processing, the SSP remains stably associated with the GP complex following cleavage by signal peptidase and plays crucial roles in the trafficking of GP through the secretory pathway. Post-translationally, myristoylation is necessary for GP2-mediated fusion activity.

It is found in the virion membrane. The protein localises to the host endoplasmic reticulum membrane. Its subcellular location is the host Golgi apparatus membrane. It localises to the host cell membrane. In terms of biological role, class I viral fusion protein that directs fusion of viral and host endosomal membranes, leading to delivery of the nucleocapsid into the cytoplasm. Membrane fusion is mediated by irreversible conformational changes induced upon acidification in the endosome. Stable signal peptide (SSP): cleaved and functions as a signal peptide. In addition, it is also retained as the third component of the GP complex. The SSP is required for efficient glycoprotein expression, post-translational maturation cleavage of GP1 and GP2, glycoprotein transport to the cell surface plasma membrane, formation of infectious virus particles, and acid pH-dependent glycoprotein-mediated cell fusion. Its function is as follows. Interacts with the host receptor. Mediates virus attachment to host TFRC. This attachment induces virion internalization predominantly through clathrin-mediated endocytosis. In Machupo virus (MACV), this protein is Pre-glycoprotein polyprotein GP complex.